Reading from the N-terminus, the 270-residue chain is Shikimate dehydrogenase (NADP(+)) (270 aa).

Residues 15–17 (SKS) and Thr-62 each bind shikimate. The Proton acceptor role is filled by Lys-66. Asp-78 serves as a coordination point for NADP(+). Asn-87 and Asp-103 together coordinate shikimate. NADP(+) is bound by residues 128 to 132 (GAGGA), 152 to 157 (NRTVDR), and Leu-213. Shikimate is bound at residue Tyr-215. NADP(+) is bound at residue Gly-237.

It belongs to the shikimate dehydrogenase family. Homodimer.

It catalyses the reaction shikimate + NADP(+) = 3-dehydroshikimate + NADPH + H(+). The protein operates within metabolic intermediate biosynthesis; chorismate biosynthesis; chorismate from D-erythrose 4-phosphate and phosphoenolpyruvate: step 4/7. Its function is as follows. Involved in the biosynthesis of the chorismate, which leads to the biosynthesis of aromatic amino acids. Catalyzes the reversible NADPH linked reduction of 3-dehydroshikimate (DHSA) to yield shikimate (SA). This Halorhodospira halophila (strain DSM 244 / SL1) (Ectothiorhodospira halophila (strain DSM 244 / SL1)) protein is Shikimate dehydrogenase (NADP(+)).